A 205-amino-acid chain; its full sequence is Small ribosomal subunit protein uS4 (205 aa).

The span at 1–16 shows a compositional bias: basic and acidic residues; that stretch reads MSKRESSKYKIDRRMG. A disordered region spans residues 1–46; the sequence is MSKRESSKYKIDRRMGENIWGRPKSPVNRREYGPGQHGQRRKGKLS. The S4 RNA-binding domain occupies 94–157; the sequence is SRLDAIVYRA…KQLVIVLESV (64 aa).

This sequence belongs to the universal ribosomal protein uS4 family. Part of the 30S ribosomal subunit. Contacts protein S5. The interaction surface between S4 and S5 is involved in control of translational fidelity.

Functionally, one of the primary rRNA binding proteins, it binds directly to 16S rRNA where it nucleates assembly of the body of the 30S subunit. With S5 and S12 plays an important role in translational accuracy. The protein is Small ribosomal subunit protein uS4 of Rhizobium rhizogenes (strain K84 / ATCC BAA-868) (Agrobacterium radiobacter).